Consider the following 542-residue polypeptide: Phosphoacetylglucosamine mutase (542 aa).

N-acetylmethionine is present on Met1. Thr62 is subject to Phosphothreonine. The Phosphoserine intermediate role is filled by Ser64. Residues Ser64, Asp276, Asp278, and Asp280 each contribute to the Mg(2+) site. A Phosphoserine modification is found at Ser64. Substrate is bound by residues 370-372 (EAN), 496-500 (RPSGT), and Arg505.

It belongs to the phosphohexose mutase family. It depends on Mg(2+) as a cofactor.

It carries out the reaction N-acetyl-alpha-D-glucosamine 1-phosphate = N-acetyl-D-glucosamine 6-phosphate. The protein operates within nucleotide-sugar biosynthesis; UDP-N-acetyl-alpha-D-glucosamine biosynthesis; N-acetyl-alpha-D-glucosamine 1-phosphate from alpha-D-glucosamine 6-phosphate (route I): step 2/2. Functionally, catalyzes the conversion of GlcNAc-6-P into GlcNAc-1-P during the synthesis of uridine diphosphate/UDP-GlcNAc, a sugar nucleotide critical to multiple glycosylation pathways including protein N- and O-glycosylation. In Mus musculus (Mouse), this protein is Phosphoacetylglucosamine mutase.